Reading from the N-terminus, the 97-residue chain is Co-chaperonin GroES (97 aa).

This sequence belongs to the GroES chaperonin family. Heptamer of 7 subunits arranged in a ring. Interacts with the chaperonin GroEL.

It localises to the cytoplasm. Its function is as follows. Together with the chaperonin GroEL, plays an essential role in assisting protein folding. The GroEL-GroES system forms a nano-cage that allows encapsulation of the non-native substrate proteins and provides a physical environment optimized to promote and accelerate protein folding. GroES binds to the apical surface of the GroEL ring, thereby capping the opening of the GroEL channel. The sequence is that of Co-chaperonin GroES from Pseudomonas putida (strain W619).